The following is a 354-amino-acid chain: Photosystem II protein D1 2 (354 aa).

The next 3 helical transmembrane spans lie at 29–46, 118–133, and 142–156; these read YIGWFGVLMIPTLLTATT, HFLIGVFCYMGREWEL, and WIAVAYSAPVAAATA. Histidine 118 lines the chlorophyll a pocket. Pheophytin a is bound at residue tyrosine 126. [CaMn4O5] cluster-binding residues include aspartate 170 and glutamate 189. Residues 197-218 traverse the membrane as a helical segment; that stretch reads FHQLGVAGVFGGALFSAMHGSL. Position 198 (histidine 198) interacts with chlorophyll a. Residues histidine 215 and 264–265 contribute to the a quinone site; that span reads SF. Residue histidine 215 coordinates Fe cation. Fe cation is bound at residue histidine 272. The chain crosses the membrane as a helical span at residues 274-288; sequence FLAAWPVIGIWFTAL. [CaMn4O5] cluster contacts are provided by histidine 332, glutamate 333, aspartate 342, and alanine 344. Positions 345–354 are excised as a propeptide; sequence AVEVAPAVRG.

Belongs to the reaction center PufL/M/PsbA/D family. As to quaternary structure, PSII is composed of 1 copy each of membrane proteins PsbA, PsbB, PsbC, PsbD, PsbE, PsbF, PsbH, PsbI, PsbJ, PsbK, PsbL, PsbM, PsbT, PsbX, PsbY, PsbZ, Psb30/Ycf12, peripheral proteins PsbO, CyanoQ (PsbQ), PsbU, PsbV and a large number of cofactors. It forms dimeric complexes. The D1/D2 heterodimer binds P680, chlorophylls that are the primary electron donor of PSII, and subsequent electron acceptors. It shares a non-heme iron and each subunit binds pheophytin, quinone, additional chlorophylls, carotenoids and lipids. D1 provides most of the ligands for the Mn4-Ca-O5 cluster of the oxygen-evolving complex (OEC). There is also a Cl(-1) ion associated with D1 and D2, which is required for oxygen evolution. The PSII complex binds additional chlorophylls, carotenoids and specific lipids. serves as cofactor. Post-translationally, tyr-161 forms a radical intermediate that is referred to as redox-active TyrZ, YZ or Y-Z. C-terminally processed by CtpA; processing is essential to allow assembly of the oxygen-evolving complex and thus photosynthetic growth.

It localises to the cellular thylakoid membrane. The catalysed reaction is 2 a plastoquinone + 4 hnu + 2 H2O = 2 a plastoquinol + O2. Functionally, photosystem II (PSII) is a light-driven water:plastoquinone oxidoreductase that uses light energy to abstract electrons from H(2)O, generating O(2) and a proton gradient subsequently used for ATP formation. It consists of a core antenna complex that captures photons, and an electron transfer chain that converts photonic excitation into a charge separation. The D1/D2 (PsbA/PsbD) reaction center heterodimer binds P680, the primary electron donor of PSII as well as several subsequent electron acceptors. The sequence is that of Photosystem II protein D1 2 from Synechococcus sp. (strain JA-2-3B'a(2-13)) (Cyanobacteria bacterium Yellowstone B-Prime).